The primary structure comprises 329 residues: DNA-directed RNA polymerase subunit alpha (329 aa).

The alpha N-terminal domain (alpha-NTD) stretch occupies residues 1–235; the sequence is MQGSVTEFLK…EQLDAFVDLR (235 aa). The interval 249 to 329 is alpha C-terminal domain (alpha-CTD); the sequence is FDPILLRPVD…NWPPASIAED (81 aa).

Belongs to the RNA polymerase alpha chain family. As to quaternary structure, homodimer. The RNAP catalytic core consists of 2 alpha, 1 beta, 1 beta' and 1 omega subunit. When a sigma factor is associated with the core the holoenzyme is formed, which can initiate transcription.

It carries out the reaction RNA(n) + a ribonucleoside 5'-triphosphate = RNA(n+1) + diphosphate. DNA-dependent RNA polymerase catalyzes the transcription of DNA into RNA using the four ribonucleoside triphosphates as substrates. The protein is DNA-directed RNA polymerase subunit alpha of Aliivibrio salmonicida (strain LFI1238) (Vibrio salmonicida (strain LFI1238)).